A 427-amino-acid chain; its full sequence is Glutamate-1-semialdehyde 2,1-aminomutase (427 aa).

An N6-(pyridoxal phosphate)lysine modification is found at lysine 265.

Belongs to the class-III pyridoxal-phosphate-dependent aminotransferase family. HemL subfamily. Homodimer. Pyridoxal 5'-phosphate is required as a cofactor.

It localises to the cytoplasm. It carries out the reaction (S)-4-amino-5-oxopentanoate = 5-aminolevulinate. Its pathway is porphyrin-containing compound metabolism; protoporphyrin-IX biosynthesis; 5-aminolevulinate from L-glutamyl-tRNA(Glu): step 2/2. The sequence is that of Glutamate-1-semialdehyde 2,1-aminomutase from Burkholderia thailandensis (strain ATCC 700388 / DSM 13276 / CCUG 48851 / CIP 106301 / E264).